Here is a 365-residue protein sequence, read N- to C-terminus: Chloroplast protein FOR GROWTH AND FERTILITY 1 (365 aa).

2 disordered regions span residues 1-30 and 62-90; these read MERLLQPSSSSSSISPSKFPSRTSPFLPRL and YTPIGSNTTNNSFNGSPKSDESKPNPGFL. A chloroplast-targeting transit peptide spans 1–79; it reads MERLLQPSSS…TNNSFNGSPK (79 aa). 2 stretches are compositionally biased toward low complexity: residues 7–24 and 62–77; these read PSSSSSSISPSKFPSRTS and YTPIGSNTTNNSFNGS. 7 helical membrane-spanning segments follow: residues 109–129, 139–159, 182–202, 218–238, 274–294, 301–321, and 345–365; these read VILISAVAVLLLNPLLAPPAF, GWLTSAWTGFLAGCLHTLSGP, ALWGCGHDAGQVIFGLLFLLL, IVGLTLVIIGAMGIKEASEIP, GVVHGLQPDALMIVLPALALP, AFLIMFLVGTVIAMGSYTAFI, and LVAIGLGLGIVISPFFGFSLY.

As to expression, mostly expressed in leaves and flowers, to a lower extent, in stems, roots, floral bud, inflorescence and siliques, and, barely, in seedlings.

It localises to the plastid. The protein resides in the chloroplast membrane. It is found in the plastid membrane. Together with CGF2, essential protein which supports female gametogenesis and embryogenesis, probably by securing local energy supply. The protein is Chloroplast protein FOR GROWTH AND FERTILITY 1 of Arabidopsis thaliana (Mouse-ear cress).